A 200-amino-acid chain; its full sequence is Pyridoxal 5'-phosphate synthase subunit PdxT (200 aa).

L-glutamine is bound at residue 52 to 54; sequence GES. Catalysis depends on Cys84, which acts as the Nucleophile. L-glutamine is bound by residues Arg116 and 145–146; that span reads IR. Active-site charge relay system residues include His181 and Glu183.

Belongs to the glutaminase PdxT/SNO family. In terms of assembly, in the presence of PdxS, forms a dodecamer of heterodimers. Only shows activity in the heterodimer.

It carries out the reaction aldehydo-D-ribose 5-phosphate + D-glyceraldehyde 3-phosphate + L-glutamine = pyridoxal 5'-phosphate + L-glutamate + phosphate + 3 H2O + H(+). It catalyses the reaction L-glutamine + H2O = L-glutamate + NH4(+). The protein operates within cofactor biosynthesis; pyridoxal 5'-phosphate biosynthesis. Functionally, catalyzes the hydrolysis of glutamine to glutamate and ammonia as part of the biosynthesis of pyridoxal 5'-phosphate. The resulting ammonia molecule is channeled to the active site of PdxS. The sequence is that of Pyridoxal 5'-phosphate synthase subunit PdxT from Saccharolobus islandicus (strain Y.G.57.14 / Yellowstone #1) (Sulfolobus islandicus).